The chain runs to 240 residues: Keratinocyte-associated protein 3 (240 aa).

Helical transmembrane passes span 21 to 41, 63 to 83, 95 to 115, and 163 to 183; these read VGLALILVGHVNLLLGAVLHG, VISVGSGLLSVSLGLVALLAS, LLALALVNLLLSAACSLGLLL, and ALALWIPSVFMSAAEAALSGY.

The protein belongs to the TMEM54 family.

The protein resides in the membrane. The chain is Keratinocyte-associated protein 3 (KRTCAP3) from Bos taurus (Bovine).